The following is an 81-amino-acid chain: Mu/omega-theraphotoxin-Hs1a (81 aa).

The signal sequence occupies residues 1–21; the sequence is MRASMFLALAGLVLLFVVCYA. Positions 22 to 48 are excised as a propeptide; sequence SESEEKEFPRELLFKFFAVDDFKGEER. 3 disulfide bridges follow: C50/C65, C57/C70, and C64/C77.

It belongs to the neurotoxin 10 (Hwtx-1) family. 23 (HwTx-I) subfamily. In terms of tissue distribution, expressed by the venom gland.

Its subcellular location is the secreted. Lethal toxin with multiple biological activities. Inhibits voltage-gated TTX-sensitive sodium channels in DRG neurons (IC(50)=55 nM) and also shows activity when directly tested on Nav1.7/SCN9A (IC(50)=25.1-630 nM). Inhibits N-type calcium channels (Cav2.2/CACNA1B (IC(50)=100 nM)). Also blocks neuromuscular transmission. In vivo, intrathecal injected toxin shows analgesic activity in the rat formalin-induced pain model, without induction of motor dysfunction in rats. The chain is Mu/omega-theraphotoxin-Hs1a from Cyriopagopus schmidti (Chinese bird spider).